The sequence spans 452 residues: Phosphoglucosamine mutase (452 aa).

Ser-108 functions as the Phosphoserine intermediate in the catalytic mechanism. Residues Ser-108, Asp-247, Asp-249, and Asp-251 each coordinate Mg(2+). Residue Ser-108 is modified to Phosphoserine.

It belongs to the phosphohexose mutase family. Mg(2+) is required as a cofactor. Post-translationally, activated by phosphorylation.

It catalyses the reaction alpha-D-glucosamine 1-phosphate = D-glucosamine 6-phosphate. Its function is as follows. Catalyzes the conversion of glucosamine-6-phosphate to glucosamine-1-phosphate. This is Phosphoglucosamine mutase from Paraburkholderia xenovorans (strain LB400).